Consider the following 490-residue polypeptide: Cytochrome P450 2C14 (490 aa).

Cys435 lines the heme pocket.

This sequence belongs to the cytochrome P450 family. Requires heme as cofactor.

The protein resides in the endoplasmic reticulum membrane. Its subcellular location is the microsome membrane. It catalyses the reaction an organic molecule + reduced [NADPH--hemoprotein reductase] + O2 = an alcohol + oxidized [NADPH--hemoprotein reductase] + H2O + H(+). In terms of biological role, cytochromes P450 are a group of heme-thiolate monooxygenases. In liver microsomes, this enzyme is involved in an NADPH-dependent electron transport pathway. It oxidizes a variety of structurally unrelated compounds, including steroids, fatty acids, and xenobiotics. This Oryctolagus cuniculus (Rabbit) protein is Cytochrome P450 2C14 (CYP2C14).